Consider the following 155-residue polypeptide: 3-hydroxyacyl-[acyl-carrier-protein] dehydratase FabZ (155 aa).

The active site involves His58.

It belongs to the thioester dehydratase family. FabZ subfamily.

It localises to the cytoplasm. The catalysed reaction is a (3R)-hydroxyacyl-[ACP] = a (2E)-enoyl-[ACP] + H2O. In terms of biological role, involved in unsaturated fatty acids biosynthesis. Catalyzes the dehydration of short chain beta-hydroxyacyl-ACPs and long chain saturated and unsaturated beta-hydroxyacyl-ACPs. The chain is 3-hydroxyacyl-[acyl-carrier-protein] dehydratase FabZ from Rhizobium etli (strain CIAT 652).